The chain runs to 470 residues: MHDIKAIRDNPAAFDAALKRRGLAPLSSSLLAIDEKRRAAILASEQAQARRNAASKEIGEAKKAKDEARAAKLMAEVAELKTSMPEMDAAAKAADEKLRKALAEIPNLPLDEVPDGTDEHGNIQHHVFGKKRDYAFTPKPHEDLGGALGDMDFEAAAKLSGARFVVLKRGLARLERAIGQFFLDVHTGEHGYTEVNPPLLVRDDAMFGTAQLPKFAEDQFDFIKDRTISEQLEQTVVEIDQRKVRPGHFDMEQKVTPLSAPTRKDRLWLIPTAEVPLTNLVRESILDEKELPLRFTALTPCFRAEAGAAGRDTRGMIRQHQFTKVELVSITTPETSKDEHERMLSCAEEVLRRLDLHYRVMTLCTGDMGFASQKTYDIEVWMPGQGEGGAYREISSCSVCGDFQARRMDARSRGPDGKPRFVHTLNGSGTAVGRALIAVMETYQQADGSIAVPDVLLPYMGGLKVIAKGL.

272–274 (TAE) is an L-serine binding site. ATP is bound at residue 303–305 (RAE). Glu-326 is an L-serine binding site. An ATP-binding site is contributed by 393–396 (EISS). Ser-428 provides a ligand contact to L-serine.

This sequence belongs to the class-II aminoacyl-tRNA synthetase family. Type-1 seryl-tRNA synthetase subfamily. As to quaternary structure, homodimer. The tRNA molecule binds across the dimer.

It localises to the cytoplasm. It carries out the reaction tRNA(Ser) + L-serine + ATP = L-seryl-tRNA(Ser) + AMP + diphosphate + H(+). It catalyses the reaction tRNA(Sec) + L-serine + ATP = L-seryl-tRNA(Sec) + AMP + diphosphate + H(+). It functions in the pathway aminoacyl-tRNA biosynthesis; selenocysteinyl-tRNA(Sec) biosynthesis; L-seryl-tRNA(Sec) from L-serine and tRNA(Sec): step 1/1. Functionally, catalyzes the attachment of serine to tRNA(Ser). Is also able to aminoacylate tRNA(Sec) with serine, to form the misacylated tRNA L-seryl-tRNA(Sec), which will be further converted into selenocysteinyl-tRNA(Sec). The chain is Serine--tRNA ligase from Nitrobacter hamburgensis (strain DSM 10229 / NCIMB 13809 / X14).